A 261-amino-acid chain; its full sequence is Small ribosomal subunit protein eS4z (261 aa).

One can recognise an S4 RNA-binding domain in the interval 42-104 (LPLVLIIRNR…TNENFRLLYD (63 aa)).

It belongs to the eukaryotic ribosomal protein eS4 family.

The protein localises to the cytoplasm. This is Small ribosomal subunit protein eS4z (RPS4A) from Arabidopsis thaliana (Mouse-ear cress).